We begin with the raw amino-acid sequence, 125 residues long: Large ribosomal subunit protein bL12 (125 aa).

It belongs to the bacterial ribosomal protein bL12 family. Homodimer. Part of the ribosomal stalk of the 50S ribosomal subunit. Forms a multimeric L10(L12)X complex, where L10 forms an elongated spine to which 2 to 4 L12 dimers bind in a sequential fashion. Binds GTP-bound translation factors.

Functionally, forms part of the ribosomal stalk which helps the ribosome interact with GTP-bound translation factors. Is thus essential for accurate translation. The polypeptide is Large ribosomal subunit protein bL12 (Francisella tularensis subsp. novicida (strain U112)).